The following is a 231-amino-acid chain: Phosphatidylserine decarboxylase proenzyme (231 aa).

Residue Ser-188 is the Schiff-base intermediate with substrate; via pyruvic acid of the active site. A Pyruvic acid (Ser); by autocatalysis modification is found at Ser-188.

The protein belongs to the phosphatidylserine decarboxylase family. PSD-A subfamily. As to quaternary structure, heterodimer of a large membrane-associated beta subunit and a small pyruvoyl-containing alpha subunit. It depends on pyruvate as a cofactor. Is synthesized initially as an inactive proenzyme. Formation of the active enzyme involves a self-maturation process in which the active site pyruvoyl group is generated from an internal serine residue via an autocatalytic post-translational modification. Two non-identical subunits are generated from the proenzyme in this reaction, and the pyruvate is formed at the N-terminus of the alpha chain, which is derived from the carboxyl end of the proenzyme. The post-translation cleavage follows an unusual pathway, termed non-hydrolytic serinolysis, in which the side chain hydroxyl group of the serine supplies its oxygen atom to form the C-terminus of the beta chain, while the remainder of the serine residue undergoes an oxidative deamination to produce ammonia and the pyruvoyl prosthetic group on the alpha chain.

The protein localises to the cell membrane. The enzyme catalyses a 1,2-diacyl-sn-glycero-3-phospho-L-serine + H(+) = a 1,2-diacyl-sn-glycero-3-phosphoethanolamine + CO2. It participates in phospholipid metabolism; phosphatidylethanolamine biosynthesis; phosphatidylethanolamine from CDP-diacylglycerol: step 2/2. In terms of biological role, catalyzes the formation of phosphatidylethanolamine (PtdEtn) from phosphatidylserine (PtdSer). This Rickettsia peacockii (strain Rustic) protein is Phosphatidylserine decarboxylase proenzyme.